Consider the following 163-residue polypeptide: MADEEKLPPGWEKRMSRSSGRVYYFNHITNASQWERPSGNSSSGGKNGQGEPARVRCSHLLVKHSQSRRPSSWRQEKITRTKEEALELINGYIQKIKSGEEDFESLASQFSDCSSAKARGDLGAFSRGQMQKPFEDASFALRTGEMSGPVFTDSGIHIILRTE.

In terms of domain architecture, WW spans 5-39 (EKLPPGWEKRMSRSSGRVYYFNHITNASQWERPSG). The segment at 33–54 (QWERPSGNSSSGGKNGQGEPAR) is disordered. S43 carries the phosphoserine modification. The residue at position 46 (K46) is an N6-acetyllysine. Positions 52–163 (PARVRCSHLL…SGIHIILRTE (112 aa)) constitute a PpiC domain. At S71 the chain carries Phosphoserine; by DAPK1. Phosphoserine is present on S108.

In terms of assembly, interacts with STIL. Interacts with KIF20B. Interacts with NEK6. Interacts (via WW domain) with PRKX. Interacts with BTK. Interacts (via PpiC domain) with DAPK1. Interacts with the phosphorylated form of RAF1. Interacts (via WW domain) with ATCAY; upon NGF stimulation. Interacts with PML (isoform PML-4). Interacts with BCL6. Interacts with FBXW7, disrupting FBXW7 dimerization and promoting FBXW7 autoubiquitination and degradation. Directly interacts with RBBP8/CtIP; this interaction depends upon RBBP8 phosphorylation. Interacts (via WW domain) with IRAK3/IRAK-M (when phosphorylated at 'Ser-110') in response to IL33-mediated (but not TLR4 ligand LPS) dendritic cell stimulation. Interacts with PGK1 (when phosphorylated at 'Ser-203'); the interaction is direct, occurs under hypoxic conditions, and targets PGK1 to the mitochondrion by promoting interactions with the TOM complex. Post-translationally, phosphorylation at Ser-71 by DAPK1 results in inhibition of its catalytic activity, nuclear localization, and its ability to induce centrosome amplification, chromosome instability and cell transformation. Ser-71 is dephosphorylated upon IL33-stimulation of dendritic cells. As to expression, expressed in immune cells in the lung (at protein level). The phosphorylated form at Ser-71 is expressed in normal breast tissue cells but not in breast cancer cells.

The protein resides in the nucleus. It is found in the nucleus speckle. It localises to the cytoplasm. It catalyses the reaction [protein]-peptidylproline (omega=180) = [protein]-peptidylproline (omega=0). In terms of biological role, peptidyl-prolyl cis/trans isomerase (PPIase) that binds to and isomerizes specific phosphorylated Ser/Thr-Pro (pSer/Thr-Pro) motifs. By inducing conformational changes in a subset of phosphorylated proteins, acts as a molecular switch in multiple cellular processes. Displays a preference for acidic residues located N-terminally to the proline bond to be isomerized. Regulates mitosis presumably by interacting with NIMA and attenuating its mitosis-promoting activity. Down-regulates kinase activity of BTK. Can transactivate multiple oncogenes and induce centrosome amplification, chromosome instability and cell transformation. Required for the efficient dephosphorylation and recycling of RAF1 after mitogen activation. Binds and targets PML and BCL6 for degradation in a phosphorylation-dependent manner. Acts as a regulator of JNK cascade by binding to phosphorylated FBXW7, disrupting FBXW7 dimerization and promoting FBXW7 autoubiquitination and degradation: degradation of FBXW7 leads to subsequent stabilization of JUN. May facilitate the ubiquitination and proteasomal degradation of RBBP8/CtIP through CUL3/KLHL15 E3 ubiquitin-protein ligase complex, hence favors DNA double-strand repair through error-prone non-homologous end joining (NHEJ) over error-free, RBBP8-mediated homologous recombination (HR). Upon IL33-induced lung inflammation, catalyzes cis-trans isomerization of phosphorylated IRAK3/IRAK-M, inducing IRAK3 stabilization, nuclear translocation and expression of pro-inflammatory genes in dendritic cells. Catalyzes cis-trans isomerization of phosphorylated phosphoglycerate kinase PGK1 under hypoxic conditions to promote its binding to the TOM complex and targeting to the mitochondrion. The polypeptide is Peptidyl-prolyl cis-trans isomerase NIMA-interacting 1 (PIN1) (Homo sapiens (Human)).